We begin with the raw amino-acid sequence, 263 residues long: uncharacterized protein (263 aa).

ATP is bound at residue 31–38; sequence GPTGSGKT.

It belongs to the CbbQ/NirQ/NorQ/GpvN family.

This is an uncharacterized protein from Staphylococcus aureus (strain USA300).